The sequence spans 116 residues: Large ribosomal subunit protein uL18 (116 aa).

This sequence belongs to the universal ribosomal protein uL18 family. As to quaternary structure, part of the 50S ribosomal subunit; part of the 5S rRNA/L5/L18/L25 subcomplex. Contacts the 5S and 23S rRNAs.

In terms of biological role, this is one of the proteins that bind and probably mediate the attachment of the 5S RNA into the large ribosomal subunit, where it forms part of the central protuberance. This chain is Large ribosomal subunit protein uL18, found in Caulobacter vibrioides (strain ATCC 19089 / CIP 103742 / CB 15) (Caulobacter crescentus).